We begin with the raw amino-acid sequence, 800 residues long: Fibroblast growth factor receptor 4 (800 aa).

The signal sequence occupies residues 1–16; it reads MWLLLALLSIFQETPA. 3 consecutive Ig-like C2-type domains span residues 17 to 115, 148 to 236, and 245 to 345; these read FSLE…LIMD, PQRM…YLLD, and PILQ…AWLT. Residues 17 to 367 lie on the Extracellular side of the membrane; it reads FSLEASEEME…TATSEARYTD (351 aa). Cysteine 54 and cysteine 98 are disulfide-bonded. The N-linked (GlcNAc...) asparagine glycan is linked to asparagine 109. A disulfide bridge links cysteine 168 with cysteine 220. Residues asparagine 254, asparagine 286, and asparagine 307 are each glycosylated (N-linked (GlcNAc...) asparagine). A disulfide bridge connects residues cysteine 267 and cysteine 329. A helical membrane pass occupies residues 368–388; that stretch reads IILYVSGSLALVLLLLLAGVY. Topologically, residues 389–800 are cytoplasmic; that stretch reads HRQAIHGHHS…PFPFPEAQTT (412 aa). The 289-residue stretch at 465-753 folds into the Protein kinase domain; the sequence is LVLGKPLGEG…VLLAVSEEYL (289 aa). Residues 471–479 and lysine 501 contribute to the ATP site; that span reads LGEGCFGQV. Serine 571 carries the post-translational modification Phosphoserine. Aspartate 610 (proton acceptor) is an active-site residue. Phosphotyrosine; by autocatalysis is present on residues tyrosine 640, tyrosine 641, and tyrosine 752. Residues 768–800 form a disordered region; that stretch reads DASSTCSSSDSVFSHDPLPLEPSPFPFPEAQTT. Positions 770-781 are enriched in low complexity; the sequence is SSTCSSSDSVFS.

This sequence belongs to the protein kinase superfamily. Tyr protein kinase family. Fibroblast growth factor receptor subfamily. As to quaternary structure, monomer. Homodimer after ligand binding. Interacts with FGF1, FGF2, FGF4, FGF6, FGF8, FGF9, FGF16, FGF17, FGF18, FGF19, FGF21 and FGF23 (in vitro). Binding affinity for FGF family members is enhanced by interactions between FGFs and heparan sulfate proteoglycans. Interacts with KLB; this strongly increases the affinity for FGF19 and FGF23. Affinity for FGF19 is strongly increased by KLB and sulfated glycosaminoglycans. KLB and KL both interact with the core-glycosylated FGFR4 in the endoplasmic reticulum and promote its degradation, so that only FGFR4 with fully mature N-glycans is expressed at the cell surface. Identified in a complex with NCAM1, CDH2, PLCG1, FRS2, SRC, SHC1, GAP43 and CTTN. Interacts with MMP14 and HIP1. Interacts with STAT3. In terms of processing, N-glycosylated. Full maturation of the glycan chains in the Golgi is essential for high affinity interaction with FGF19. Ubiquitinated. Subject to proteasomal degradation when not fully glycosylated. Post-translationally, autophosphorylated. Binding of FGF family members together with heparan sulfate proteoglycan or heparin promotes receptor dimerization and autophosphorylation on tyrosine residues. Autophosphorylation occurs in trans between the two FGFR molecules present in the dimer.

Its subcellular location is the cell membrane. It localises to the endosome. It is found in the endoplasmic reticulum. It carries out the reaction L-tyrosyl-[protein] + ATP = O-phospho-L-tyrosyl-[protein] + ADP + H(+). Present in an inactive conformation in the absence of bound ligand. Ligand binding leads to dimerization and activation by autophosphorylation on tyrosine residues. In terms of biological role, tyrosine-protein kinase that acts as a cell-surface receptor for fibroblast growth factors and plays a role in the regulation of cell proliferation, differentiation and migration, and in regulation of lipid metabolism, bile acid biosynthesis, glucose uptake, vitamin D metabolism and phosphate homeostasis. Required for normal down-regulation of the expression of CYP7A1, the rate-limiting enzyme in bile acid synthesis, in response to FGF19. Phosphorylates PLCG1 and FRS2. Ligand binding leads to the activation of several signaling cascades. Activation of PLCG1 leads to the production of the cellular signaling molecules diacylglycerol and inositol 1,4,5-trisphosphate. Phosphorylation of FRS2 triggers recruitment of GRB2, GAB1, PIK3R1 and SOS1, and mediates activation of RAS, MAPK1/ERK2, MAPK3/ERK1 and the MAP kinase signaling pathway, as well as of the AKT1 signaling pathway. Promotes SRC-dependent phosphorylation of the matrix protease MMP14 and its lysosomal degradation. FGFR4 signaling is down-regulated by receptor internalization and degradation; MMP14 promotes internalization and degradation of FGFR4. This Rattus norvegicus (Rat) protein is Fibroblast growth factor receptor 4 (Fgfr4).